Here is a 337-residue protein sequence, read N- to C-terminus: Protein BIG GRAIN 1-like (337 aa).

3 disordered regions span residues 1–32 (MRDM…PSFS), 120–163 (SAAG…RPAS), and 179–233 (KRPS…ARPS). The span at 137 to 146 (HEQPDVEKTA) shows a compositional bias: basic and acidic residues. Low complexity-rich tracts occupy residues 150-163 (PGSA…RPAS), 195-209 (PACS…SSYA), and 219-230 (RTPPTTTTTARA).

It belongs to the BIG GRAIN 1 (BG1) plant protein family.

The protein localises to the cell membrane. Its function is as follows. Involved in auxin transport. Regulator of the auxin signaling pathway. The sequence is that of Protein BIG GRAIN 1-like from Oryza sativa subsp. indica (Rice).